The following is a 78-amino-acid chain: Acyl carrier protein (78 aa).

The Carrier domain maps to 2–77 (SSIEERVKKI…LAIDYINANL (76 aa)). The residue at position 37 (serine 37) is an O-(pantetheine 4'-phosphoryl)serine.

Belongs to the acyl carrier protein (ACP) family. 4'-phosphopantetheine is transferred from CoA to a specific serine of apo-ACP by AcpS. This modification is essential for activity because fatty acids are bound in thioester linkage to the sulfhydryl of the prosthetic group.

It localises to the cytoplasm. It functions in the pathway lipid metabolism; fatty acid biosynthesis. In terms of biological role, carrier of the growing fatty acid chain in fatty acid biosynthesis. The sequence is that of Acyl carrier protein from Cellvibrio japonicus (strain Ueda107) (Pseudomonas fluorescens subsp. cellulosa).